The chain runs to 1342 residues: DNA-directed RNA polymerase subunit beta (1342 aa).

The protein belongs to the RNA polymerase beta chain family. The RNAP catalytic core consists of 2 alpha, 1 beta, 1 beta' and 1 omega subunit. When a sigma factor is associated with the core the holoenzyme is formed, which can initiate transcription.

The enzyme catalyses RNA(n) + a ribonucleoside 5'-triphosphate = RNA(n+1) + diphosphate. DNA-dependent RNA polymerase catalyzes the transcription of DNA into RNA using the four ribonucleoside triphosphates as substrates. This Yersinia pestis bv. Antiqua (strain Angola) protein is DNA-directed RNA polymerase subunit beta.